The chain runs to 190 residues: MMIYGLIACLIFVTSSIASPLYIPVIPPISEDKSFNSVEVLVSLFRDDQKDYTVTSQFNNYTIDTKDWTIGVLSTPDGLDIPLTNITYWSRFTIGRALFKSESEDIFQKKMSILGVSIECKKSSTLLTFLTVRKMTRVFNKFPDMAYYRGDCLKAVYVTMTYKNTKTGETDYTYLSNGGLPAYYRNGVDG.

It belongs to the orthopoxvirus OPG209 protein family.

The sequence is that of Protein OPG209 (OPG209) from Bos taurus (Bovine).